We begin with the raw amino-acid sequence, 530 residues long: Phosphoenolpyruvate carboxykinase (ATP) (530 aa).

Substrate contacts are provided by arginine 57, tyrosine 193, and lysine 199. Residues lysine 199, histidine 218, and 234–242 (GLSGTGKTT) each bind ATP. Mn(2+)-binding residues include lysine 199 and histidine 218. Aspartate 255 contributes to the Mn(2+) binding site. ATP-binding residues include glutamate 283, arginine 320, and threonine 445. Residue arginine 320 coordinates substrate.

It belongs to the phosphoenolpyruvate carboxykinase (ATP) family. Mn(2+) is required as a cofactor.

The protein localises to the cytoplasm. It catalyses the reaction oxaloacetate + ATP = phosphoenolpyruvate + ADP + CO2. It functions in the pathway carbohydrate biosynthesis; gluconeogenesis. In terms of biological role, involved in the gluconeogenesis. Catalyzes the conversion of oxaloacetate (OAA) to phosphoenolpyruvate (PEP) through direct phosphoryl transfer between the nucleoside triphosphate and OAA. In Leptospira interrogans serogroup Icterohaemorrhagiae serovar copenhageni (strain Fiocruz L1-130), this protein is Phosphoenolpyruvate carboxykinase (ATP).